We begin with the raw amino-acid sequence, 248 residues long: ATP synthase subunit a (248 aa).

The next 7 helical transmembrane spans lie at 29 to 49 (AMLT…CLFS), 85 to 105 (VFPF…QGLV), 115 to 135 (LIQT…IVLA), 143 to 163 (LFLP…IEIV), 176 to 196 (LFAN…VAWA), 201 to 221 (GGLL…LFGL), and 227 to 247 (LIQA…AIVL).

Belongs to the ATPase A chain family. As to quaternary structure, F-type ATPases have 2 components, CF(1) - the catalytic core - and CF(0) - the membrane proton channel. CF(1) has five subunits: alpha(3), beta(3), gamma(1), delta(1), epsilon(1). CF(0) has three main subunits: a, b and c.

Its subcellular location is the mitochondrion inner membrane. In terms of biological role, mitochondrial membrane ATP synthase (F(1)F(0) ATP synthase or Complex V) produces ATP from ADP in the presence of a proton gradient across the membrane which is generated by electron transport complexes of the respiratory chain. F-type ATPases consist of two structural domains, F(1) - containing the extramembraneous catalytic core and F(0) - containing the membrane proton channel, linked together by a central stalk and a peripheral stalk. During catalysis, ATP synthesis in the catalytic domain of F(1) is coupled via a rotary mechanism of the central stalk subunits to proton translocation. Key component of the proton channel; it may play a direct role in the translocation of protons across the membrane. In Pylaiella littoralis (Seaweed), this protein is ATP synthase subunit a (ATP6).